A 181-amino-acid polypeptide reads, in one-letter code: CD160 antigen (181 aa).

An N-terminal signal peptide occupies residues 1–24 (MLLEPGRGCCALAILLAIVDIQSG). The Ig-like V-type domain maps to 25-133 (GCINITSSAS…QGHFFSILFT (109 aa)). Asn28 is a glycosylation site (N-linked (GlcNAc...) asparagine). Disulfide bonds link Cys44/Cys112 and Cys61/Cys68. An N-linked (GlcNAc...) asparagine glycan is attached at Asn137. A lipid anchor (GPI-anchor amidated serine) is attached at Ser159. Residues 160–181 (SGFLQEKVWVMLVTSLVALQAL) constitute a propeptide, removed in mature form.

In terms of assembly, homomultimer; disulfide-linked. Interacts with HLA-G. Interacts with HLA-A2-B2M in complex with an HIV-derived peptide. Interacts with TNFRSF14 (via cysteine-rich domain 1); this interaction is direct. Interacts with LCK and CD247/CD3 zeta chain. In terms of tissue distribution, expression is restricted to functional NK and cytotoxic T lymphocytes. Expressed in viral-specific effector memory and terminally differentiated effector memory CD8+ T cells. Expressed in memory and activated CD4+ T cell subsets (at protein level). Expressed at high levels in intraepithelial lymphocytes (at protein level). Expressed in both alpha-beta and gamma-delta CD8+ T cell subsets (at protein level). Expressed in umbilical vein endothelial cells (at protein level). Expressed in monocytes and at lower levels in B cells. Isoform 3: Expressed exclusively in activated NK cells (at protein level).

The protein resides in the cell membrane. It is found in the secreted. Its function is as follows. Receptor on immune cells capable to deliver stimulatory or inhibitory signals that regulate cell activation and differentiation. Exists as a GPI-anchored and as a transmembrane form, each likely initiating distinct signaling pathways via phosphoinositol 3-kinase in activated NK cells and via LCK and CD247/CD3 zeta chain in activated T cells. Receptor for both classical and non-classical MHC class I molecules. In the context of acute viral infection, recognizes HLA-C and triggers NK cell cytotoxic activity, likely playing a role in anti-viral innate immune response. On CD8+ T cells, binds HLA-A2-B2M in complex with a viral peptide and provides a costimulatory signal to activated/memory T cells. Upon persistent antigen stimulation, such as occurs during chronic viral infection, may progressively inhibit TCR signaling in memory CD8+ T cells, contributing to T cell exhaustion. On endothelial cells, recognizes HLA-G and controls angiogenesis in immune privileged sites. Receptor or ligand for TNF superfamily member TNFRSF14, participating in bidirectional cell-cell contact signaling between antigen presenting cells and lymphocytes. Upon ligation of TNFRSF14, provides stimulatory signal to NK cells enhancing IFNG production and anti-tumor immune response. On activated CD4+ T cells, interacts with TNFRSF14 and down-regulates CD28 costimulatory signaling, restricting memory and alloantigen-specific immune response. In the context of bacterial infection, acts as a ligand for TNFRSF14 on epithelial cells, triggering the production of antimicrobial proteins and pro-inflammatory cytokines. The soluble GPI-cleaved form, usually released by activated lymphocytes, might play an immune regulatory role by limiting lymphocyte effector functions. The sequence is that of CD160 antigen from Homo sapiens (Human).